A 156-amino-acid polypeptide reads, in one-letter code: SsrA-binding protein (156 aa).

Belongs to the SmpB family.

The protein resides in the cytoplasm. In terms of biological role, required for rescue of stalled ribosomes mediated by trans-translation. Binds to transfer-messenger RNA (tmRNA), required for stable association of tmRNA with ribosomes. tmRNA and SmpB together mimic tRNA shape, replacing the anticodon stem-loop with SmpB. tmRNA is encoded by the ssrA gene; the 2 termini fold to resemble tRNA(Ala) and it encodes a 'tag peptide', a short internal open reading frame. During trans-translation Ala-aminoacylated tmRNA acts like a tRNA, entering the A-site of stalled ribosomes, displacing the stalled mRNA. The ribosome then switches to translate the ORF on the tmRNA; the nascent peptide is terminated with the 'tag peptide' encoded by the tmRNA and targeted for degradation. The ribosome is freed to recommence translation, which seems to be the essential function of trans-translation. The polypeptide is SsrA-binding protein (Staphylococcus epidermidis (strain ATCC 35984 / DSM 28319 / BCRC 17069 / CCUG 31568 / BM 3577 / RP62A)).